The chain runs to 310 residues: GMP synthase [glutamine-hydrolyzing] subunit B (310 aa).

In terms of domain architecture, GMPS ATP-PPase spans 2–185 (FKTEPFIEES…LGLPDQIAHR (184 aa)). 29 to 35 (SGGVDSS) provides a ligand contact to ATP.

As to quaternary structure, heterodimer composed of a glutamine amidotransferase subunit (A) and a GMP-binding subunit (B).

The enzyme catalyses XMP + L-glutamine + ATP + H2O = GMP + L-glutamate + AMP + diphosphate + 2 H(+). The protein operates within purine metabolism; GMP biosynthesis; GMP from XMP (L-Gln route): step 1/1. In terms of biological role, catalyzes the synthesis of GMP from XMP. The protein is GMP synthase [glutamine-hydrolyzing] subunit B of Methanococcus maripaludis (strain C7 / ATCC BAA-1331).